The chain runs to 975 residues: Glycine dehydrogenase (decarboxylating) (975 aa).

Position 723 is an N6-(pyridoxal phosphate)lysine (K723).

Belongs to the GcvP family. In terms of assembly, the glycine cleavage system is composed of four proteins: P, T, L and H. Pyridoxal 5'-phosphate is required as a cofactor.

It carries out the reaction N(6)-[(R)-lipoyl]-L-lysyl-[glycine-cleavage complex H protein] + glycine + H(+) = N(6)-[(R)-S(8)-aminomethyldihydrolipoyl]-L-lysyl-[glycine-cleavage complex H protein] + CO2. Its function is as follows. The glycine cleavage system catalyzes the degradation of glycine. The P protein binds the alpha-amino group of glycine through its pyridoxal phosphate cofactor; CO(2) is released and the remaining methylamine moiety is then transferred to the lipoamide cofactor of the H protein. This Burkholderia orbicola (strain MC0-3) protein is Glycine dehydrogenase (decarboxylating).